An 872-amino-acid polypeptide reads, in one-letter code: Alanine--tRNA ligase (872 aa).

Positions 567, 571, 669, and 673 each coordinate Zn(2+).

Belongs to the class-II aminoacyl-tRNA synthetase family. Zn(2+) is required as a cofactor.

The protein resides in the cytoplasm. The catalysed reaction is tRNA(Ala) + L-alanine + ATP = L-alanyl-tRNA(Ala) + AMP + diphosphate. Catalyzes the attachment of alanine to tRNA(Ala) in a two-step reaction: alanine is first activated by ATP to form Ala-AMP and then transferred to the acceptor end of tRNA(Ala). Also edits incorrectly charged Ser-tRNA(Ala) and Gly-tRNA(Ala) via its editing domain. This chain is Alanine--tRNA ligase, found in Streptococcus thermophilus (strain ATCC BAA-491 / LMD-9).